We begin with the raw amino-acid sequence, 119 residues long: Hydrogenase maturation factor HypA (119 aa).

H2 contacts Ni(2+). 4 residues coordinate Zn(2+): C73, C76, C90, and C93.

Belongs to the HypA/HybF family.

Functionally, involved in the maturation of [NiFe] hydrogenases. Required for nickel insertion into the metal center of the hydrogenase. This Wolinella succinogenes (strain ATCC 29543 / DSM 1740 / CCUG 13145 / JCM 31913 / LMG 7466 / NCTC 11488 / FDC 602W) (Vibrio succinogenes) protein is Hydrogenase maturation factor HypA.